We begin with the raw amino-acid sequence, 358 residues long: Leukotriene B4 receptor 2 (358 aa).

Topologically, residues 1-24 (MSVCYRPPGNETLLSWKTSRATGT) are extracellular. Asparagine 10 carries an N-linked (GlcNAc...) asparagine glycan. A helical membrane pass occupies residues 25 to 45 (AFLLLAALLGLPGNGFVVWSL). Residues 46-60 (AGWRPARGRPLAATL) lie on the Cytoplasmic side of the membrane. The chain crosses the membrane as a helical span at residues 61–81 (VLHLALADGAVLLLTPLFVAF). Topologically, residues 82 to 96 (LTRQAWPLGQAGCKA) are extracellular. A helical transmembrane segment spans residues 97–117 (VYYVCALSMYASVLLTGLLSL). Residues 118–140 (QRCLAVTRPFLAPRLRSPALARR) lie on the Cytoplasmic side of the membrane. The chain crosses the membrane as a helical span at residues 141–161 (LLLAVWLAALLLAVPAAVYRH). Over 162 to 185 (LWRDRVCQLCHPSPVHAAAHLSLE) the chain is Extracellular. Residues 186–206 (TLTAFVLPFGLMLGCYSVTLA) traverse the membrane as a helical segment. The Cytoplasmic portion of the chain corresponds to 207 to 224 (RLRGARWGSGRHGARVGR). A helical transmembrane segment spans residues 225-245 (LVSAIVLAFGLLWAPYHAVNL). The Extracellular portion of the chain corresponds to 246–275 (LQAVAALAPPEGALAKLGGAGQAARAGTTA). A helical membrane pass occupies residues 276 to 296 (LAFFSSSVNPVLYVFTAGDLL). The Cytoplasmic segment spans residues 297 to 358 (PRAGPRFLTR…MEKDGPEWDL (62 aa)). Residues 311–358 (SGEARGGGRSREGTMELRTTPQLKVVGQGRGNGDPGGGMEKDGPEWDL) form a disordered region. Over residues 338 to 348 (QGRGNGDPGGG) the composition is skewed to gly residues. The span at 349–358 (MEKDGPEWDL) shows a compositional bias: basic and acidic residues.

The protein belongs to the G-protein coupled receptor 1 family. In terms of tissue distribution, widely expressed.

The protein resides in the cell membrane. Low-affinity receptor for leukotrienes including leukotriene B4. Mediates chemotaxis of granulocytes and macrophages. The response is mediated via G-proteins that activate a phosphatidylinositol-calcium second messenger system. The rank order of affinities for the leukotrienes is LTB4 &gt; 12-epi-LTB4 &gt; LTB5 &gt; LTB3. The protein is Leukotriene B4 receptor 2 (LTB4R2) of Homo sapiens (Human).